The sequence spans 425 residues: MNLLIKGGRVIDPSQGIDEVLDILVENGAIKELGKGLAAPAGAGVVDAAGLIVTPGLIDMHVHLRDPGLEYKEDIVTGTRAAAAGGFTSVACMPNTKPVNDNKAVTSYIVAKAKAEGLVNVFPVGSITQGSKGDALAEMGDLKEAGCVAVSDDGRPVTSSELMRRALEYAKGMGIMVISHAEDLSLVGEGVMNEGFVSTELGLKGIPWAAEDAATARDVYLAEFTNSPLHIAHVSTMGSLRIIRNAKARGVKVTCETAPHYFSLTDDAVRGYNTNAKMNPPLRTADDLAAVKEALKDGTIDAIATDHAPHHLDEKDVEFNVALNGIIGLETSLPLSLKLVEEGVLTLPALVEKMACNPAAILGIDRGTLRQGAVADITVIDPAAVWTVEAGALASKSKNSPFLGWEMKGAAAYTIVGGTVVHSRG.

Residues histidine 61 and histidine 63 each contribute to the Zn(2+) site. Substrate-binding positions include 63-65 and asparagine 95; that span reads HLR. 3 residues coordinate Zn(2+): aspartate 153, histidine 180, and histidine 233. Residue asparagine 279 participates in substrate binding. Aspartate 306 serves as a coordination point for Zn(2+). Aspartate 306 is an active-site residue. Histidine 310 provides a ligand contact to substrate.

It belongs to the metallo-dependent hydrolases superfamily. DHOase family. Class I DHOase subfamily. Zn(2+) serves as cofactor.

The enzyme catalyses (S)-dihydroorotate + H2O = N-carbamoyl-L-aspartate + H(+). The protein operates within pyrimidine metabolism; UMP biosynthesis via de novo pathway; (S)-dihydroorotate from bicarbonate: step 3/3. Functionally, catalyzes the reversible cyclization of carbamoyl aspartate to dihydroorotate. This is Dihydroorotase from Geobacter sulfurreducens (strain ATCC 51573 / DSM 12127 / PCA).